We begin with the raw amino-acid sequence, 248 residues long: Pulmonary surfactant-associated protein A (248 aa).

The signal sequence occupies residues 1–20 (MWLCPLALTLTLMAASGAAC). The Collagen-like domain maps to 31–100 (GIPGTPGSHG…PGERGPPGLP (70 aa)). Residues 33–100 (PGTPGSHGLP…PGERGPPGLP (68 aa)) are disordered. Basic and acidic residues predominate over residues 42-51 (PGRDGRDGVK). Residues 54–65 (PGPPGPMGPPGD) show a composition bias toward pro residues. Positions 134-247 (IGGKVFSTNG…CLYNRLTICE (114 aa)) constitute a C-type lectin domain. Cystine bridges form between C155–C246 and C224–C238. N207 carries an N-linked (GlcNAc...) asparagine glycan. Ca(2+)-binding residues include E215, A217, N234, and D235.

It belongs to the SFTPA family. As to quaternary structure, oligomeric complex of 6 set of homotrimers.

It is found in the secreted. It localises to the extracellular space. The protein resides in the extracellular matrix. The protein localises to the surface film. Functionally, in presence of calcium ions, it binds to surfactant phospholipids and contributes to lower the surface tension at the air-liquid interface in the alveoli of the mammalian lung and is essential for normal respiration. Enhances the expression of MYO18A/SP-R210 on alveolar macrophages. The polypeptide is Pulmonary surfactant-associated protein A (SFTPA1) (Macaca mulatta (Rhesus macaque)).